The sequence spans 270 residues: Putative tRNA (cytidine(32)/guanosine(34)-2'-O)-methyltransferase (270 aa).

Positions 53, 55, 78, 94, and 119 each coordinate S-adenosyl-L-methionine. The active-site Proton acceptor is Lys159.

Belongs to the class I-like SAM-binding methyltransferase superfamily. RNA methyltransferase RlmE family. TRM7 subfamily.

Its subcellular location is the cytoplasm. It catalyses the reaction cytidine(32)/guanosine(34) in tRNA + 2 S-adenosyl-L-methionine = 2'-O-methylcytidine(32)/2'-O-methylguanosine(34) in tRNA + 2 S-adenosyl-L-homocysteine + 2 H(+). Functionally, methylates the 2'-O-ribose of nucleotides at positions 32 and 34 of the tRNA anticodon loop of substrate tRNAs. In Dictyostelium discoideum (Social amoeba), this protein is Putative tRNA (cytidine(32)/guanosine(34)-2'-O)-methyltransferase (fsjA).